The chain runs to 521 residues: Bacillolysin (521 aa).

Positions 1–27 (MGLGKKLSVAVAASFMSLSISLPGVQA) are cleaved as a signal peptide. Residues 28–221 (AEGHQLKENQ…ILKQQNKVEH (194 aa)) constitute a propeptide, activation peptide. Asp360 contributes to the Ca(2+) binding site. Position 364 (His364) interacts with Zn(2+). The active site involves Glu365. Zn(2+) contacts are provided by His368 and Glu388. Ca(2+) contacts are provided by Asp399, Asp402, Asp404, and Glu407. The active-site Proton donor is the His449.

It belongs to the peptidase M4 family. It depends on Ca(2+) as a cofactor. The cofactor is Zn(2+).

Its subcellular location is the secreted. The catalysed reaction is Similar, but not identical, to that of thermolysin.. Extracellular zinc metalloprotease. The sequence is that of Bacillolysin (nprE) from Bacillus subtilis subsp. amylosacchariticus.